A 160-amino-acid chain; its full sequence is 6,7-dimethyl-8-ribityllumazine synthase (160 aa).

5-amino-6-(D-ribitylamino)uracil is bound by residues Phe23, 61-63, and 85-87; these read SFE and AVI. 90–91 contacts (2S)-2-hydroxy-3-oxobutyl phosphate; the sequence is DT. The Proton donor role is filled by His93. Residue Phe118 participates in 5-amino-6-(D-ribitylamino)uracil binding. Arg132 is a binding site for (2S)-2-hydroxy-3-oxobutyl phosphate.

The protein belongs to the DMRL synthase family.

The catalysed reaction is (2S)-2-hydroxy-3-oxobutyl phosphate + 5-amino-6-(D-ribitylamino)uracil = 6,7-dimethyl-8-(1-D-ribityl)lumazine + phosphate + 2 H2O + H(+). It functions in the pathway cofactor biosynthesis; riboflavin biosynthesis; riboflavin from 2-hydroxy-3-oxobutyl phosphate and 5-amino-6-(D-ribitylamino)uracil: step 1/2. Catalyzes the formation of 6,7-dimethyl-8-ribityllumazine by condensation of 5-amino-6-(D-ribitylamino)uracil with 3,4-dihydroxy-2-butanone 4-phosphate. This is the penultimate step in the biosynthesis of riboflavin. The polypeptide is 6,7-dimethyl-8-ribityllumazine synthase (Synechococcus sp. (strain CC9605)).